A 326-amino-acid chain; its full sequence is tRNA-modifying protein YgfZ (326 aa).

Residues W27 and W189 each contribute to the folate site.

Belongs to the tRNA-modifying YgfZ family.

It localises to the cytoplasm. In terms of biological role, folate-binding protein involved in regulating the level of ATP-DnaA and in the modification of some tRNAs. It is probably a key factor in regulatory networks that act via tRNA modification, such as initiation of chromosomal replication. The sequence is that of tRNA-modifying protein YgfZ from Enterobacter sp. (strain 638).